Here is a 142-residue protein sequence, read N- to C-terminus: Regulator of ribonuclease activity B (142 aa).

A disordered region spans residues 117-142 (PNADEDEYGEDGEFFDDEFADDDEKR).

The protein belongs to the RraB family. In terms of assembly, interacts with the C-terminal region of Rne.

It localises to the cytoplasm. Globally modulates RNA abundance by binding to RNase E (Rne) and regulating its endonucleolytic activity. Can modulate Rne action in a substrate-dependent manner by altering the composition of the degradosome. The polypeptide is Regulator of ribonuclease activity B (Actinobacillus succinogenes (strain ATCC 55618 / DSM 22257 / CCUG 43843 / 130Z)).